The sequence spans 912 residues: DNA ligase 4 (912 aa).

Residues glutamate 276, threonine 277, lysine 278, leucine 279, arginine 283, glutamate 336, lysine 350, phenylalanine 372, glutamate 432, lysine 437, lysine 454, and lysine 456 each coordinate ATP. Residue lysine 278 is the N6-AMP-lysine intermediate of the active site. Residue glutamate 336 coordinates Mg(2+). Position 432 (glutamate 432) interacts with Mg(2+). The tract at residues 615-625 is required for catalytic activity; it reads LASKHLYIDEY. 2 consecutive BRCT domains span residues 659–748 and 809–912; these read KVSS…PAFM and CKLC…QFLI.

Belongs to the ATP-dependent DNA ligase family. As to quaternary structure, interacts with XRCC4; the LIG4-XRCC4 subcomplex has a 1:2 stoichiometry. Component of the core long-range non-homologous end joining (NHEJ) complex (also named DNA-PK complex) composed of PRKDC, LIG4, XRCC4, XRCC6/Ku70, XRCC5/Ku86 and NHEJ1/XLF. Additional component of the NHEJ complex includes PAXX. Following autophosphorylation, PRKDC dissociates from DNA, leading to formation of the short-range NHEJ complex, composed of LIG4, XRCC4, XRCC6/Ku70, XRCC5/Ku86 and NHEJ1/XLF. The cofactor is Mg(2+).

The protein resides in the nucleus. It catalyses the reaction ATP + (deoxyribonucleotide)n-3'-hydroxyl + 5'-phospho-(deoxyribonucleotide)m = (deoxyribonucleotide)n+m + AMP + diphosphate.. Functionally, DNA ligase involved in DNA non-homologous end joining (NHEJ); required for double-strand break (DSB) repair and V(D)J recombination. Catalyzes the NHEJ ligation step of the broken DNA during DSB repair by resealing the DNA breaks after the gap filling is completed. Joins single-strand breaks in a double-stranded polydeoxynucleotide in an ATP-dependent reaction. LIG4 is mechanistically flexible: it can ligate nicks as well as compatible DNA overhangs alone, while in the presence of XRCC4, it can ligate ends with 2-nucleotides (nt) microhomology and 1-nt gaps. Forms a subcomplex with XRCC4; the LIG4-XRCC4 subcomplex is responsible for the NHEJ ligation step and XRCC4 enhances the joining activity of LIG4. In Gallus gallus (Chicken), this protein is DNA ligase 4.